Here is a 215-residue protein sequence, read N- to C-terminus: Small ribosomal subunit protein uS7 (215 aa).

Belongs to the universal ribosomal protein uS7 family. As to quaternary structure, part of the 30S ribosomal subunit.

In terms of biological role, one of the primary rRNA binding proteins, it binds directly to 16S rRNA where it nucleates assembly of the head domain of the 30S subunit. Is located at the subunit interface close to the decoding center. The protein is Small ribosomal subunit protein uS7 of Thermococcus kodakarensis (strain ATCC BAA-918 / JCM 12380 / KOD1) (Pyrococcus kodakaraensis (strain KOD1)).